The chain runs to 235 residues: tRNA (guanine-N(1)-)-methyltransferase (235 aa).

S-adenosyl-L-methionine contacts are provided by residues Gly114 and 134-139 (VGDYIL).

Belongs to the RNA methyltransferase TrmD family. As to quaternary structure, homodimer.

The protein resides in the cytoplasm. It carries out the reaction guanosine(37) in tRNA + S-adenosyl-L-methionine = N(1)-methylguanosine(37) in tRNA + S-adenosyl-L-homocysteine + H(+). Its function is as follows. Specifically methylates guanosine-37 in various tRNAs. The chain is tRNA (guanine-N(1)-)-methyltransferase from Chelativorans sp. (strain BNC1).